A 395-amino-acid polypeptide reads, in one-letter code: Endophilin-B2 (395 aa).

M1 carries the post-translational modification N-acetylmethionine. Positions 1 to 27 (MDFNMKKLASDAGIFFTRAVQFTEEKF) are membrane-binding amphipathic helix. S10 is subject to Phosphoserine. The region spanning 24–287 (EEKFGQAEKT…LGRFPGTFVG (264 aa)) is the BAR domain. 2 coiled-coil regions span residues 116–132 (IKVAEAEKQLGAAERDF) and 206–240 (ASALWNDEVDKAEQELRVAQTEFDRQAEVTRLLLE). One can recognise an SH3 domain in the interval 335 to 395 (SGTRKARVLY…VPVTYLELLS (61 aa)). S395 carries the phosphoserine modification.

The protein belongs to the endophilin family. In terms of assembly, homodimer, and heterodimer with SH3GLB1. As to expression, detected in skeletal muscle, adipocyte, brain, lung, colon and mammary gland.

The protein resides in the cytoplasm. This chain is Endophilin-B2 (SH3GLB2), found in Homo sapiens (Human).